Consider the following 395-residue polypeptide: Phosphoglycerate kinase (395 aa).

Residues 21 to 23, Arg-36, 59 to 62, Arg-113, and Arg-146 each bind substrate; these read DLN and HLGR. ATP-binding positions include Lys-197, Glu-324, and 350–353; that span reads GGDT.

This sequence belongs to the phosphoglycerate kinase family. As to quaternary structure, monomer.

It localises to the cytoplasm. The catalysed reaction is (2R)-3-phosphoglycerate + ATP = (2R)-3-phospho-glyceroyl phosphate + ADP. Its pathway is carbohydrate degradation; glycolysis; pyruvate from D-glyceraldehyde 3-phosphate: step 2/5. This is Phosphoglycerate kinase from Acinetobacter baumannii (strain AB307-0294).